The sequence spans 361 residues: tRNA/tmRNA (uracil-C(5))-methyltransferase (361 aa).

Gln185, Tyr213, Asn218, Glu234, and Asp294 together coordinate S-adenosyl-L-methionine. The active-site Nucleophile is the Cys319. The active-site Proton acceptor is Glu353.

This sequence belongs to the class I-like SAM-binding methyltransferase superfamily. RNA M5U methyltransferase family. TrmA subfamily.

The catalysed reaction is uridine(54) in tRNA + S-adenosyl-L-methionine = 5-methyluridine(54) in tRNA + S-adenosyl-L-homocysteine + H(+). The enzyme catalyses uridine(341) in tmRNA + S-adenosyl-L-methionine = 5-methyluridine(341) in tmRNA + S-adenosyl-L-homocysteine + H(+). Dual-specificity methyltransferase that catalyzes the formation of 5-methyluridine at position 54 (m5U54) in all tRNAs, and that of position 341 (m5U341) in tmRNA (transfer-mRNA). The protein is tRNA/tmRNA (uracil-C(5))-methyltransferase of Pseudomonas putida (strain W619).